Reading from the N-terminus, the 360-residue chain is Holliday junction branch migration complex subunit RuvB (360 aa).

A disordered region spans residues 1–23; it reads MIASVGDSRYYPKSVANGEKSDQ. The interval 12-204 is large ATPase domain (RuvB-L); it reads PKSVANGEKS…FGIVLRLEFY (193 aa). Residues Leu-43, Arg-44, Gly-85, Lys-88, Thr-89, Thr-90, 151–153, Arg-194, Tyr-204, and Arg-241 each bind ATP; that span reads EDY. Thr-89 provides a ligand contact to Mg(2+). The small ATPAse domain (RuvB-S) stretch occupies residues 205 to 275; that stretch reads TTEDLKIILK…TAQKALEMLE (71 aa). Residues 278–360 are head domain (RuvB-H); that stretch reads QHGFDEVDRR…KPPKKQDSLF (83 aa). DNA contacts are provided by Arg-333 and Arg-338.

It belongs to the RuvB family. Homohexamer. Forms an RuvA(8)-RuvB(12)-Holliday junction (HJ) complex. HJ DNA is sandwiched between 2 RuvA tetramers; dsDNA enters through RuvA and exits via RuvB. An RuvB hexamer assembles on each DNA strand where it exits the tetramer. Each RuvB hexamer is contacted by two RuvA subunits (via domain III) on 2 adjacent RuvB subunits; this complex drives branch migration. In the full resolvosome a probable DNA-RuvA(4)-RuvB(12)-RuvC(2) complex forms which resolves the HJ.

The protein localises to the cytoplasm. The enzyme catalyses ATP + H2O = ADP + phosphate + H(+). In terms of biological role, the RuvA-RuvB-RuvC complex processes Holliday junction (HJ) DNA during genetic recombination and DNA repair, while the RuvA-RuvB complex plays an important role in the rescue of blocked DNA replication forks via replication fork reversal (RFR). RuvA specifically binds to HJ cruciform DNA, conferring on it an open structure. The RuvB hexamer acts as an ATP-dependent pump, pulling dsDNA into and through the RuvAB complex. RuvB forms 2 homohexamers on either side of HJ DNA bound by 1 or 2 RuvA tetramers; 4 subunits per hexamer contact DNA at a time. Coordinated motions by a converter formed by DNA-disengaged RuvB subunits stimulates ATP hydrolysis and nucleotide exchange. Immobilization of the converter enables RuvB to convert the ATP-contained energy into a lever motion, pulling 2 nucleotides of DNA out of the RuvA tetramer per ATP hydrolyzed, thus driving DNA branch migration. The RuvB motors rotate together with the DNA substrate, which together with the progressing nucleotide cycle form the mechanistic basis for DNA recombination by continuous HJ branch migration. Branch migration allows RuvC to scan DNA until it finds its consensus sequence, where it cleaves and resolves cruciform DNA. The polypeptide is Holliday junction branch migration complex subunit RuvB (Koribacter versatilis (strain Ellin345)).